The sequence spans 193 residues: Ion-translocating oxidoreductase complex subunit A (193 aa).

The next 6 membrane-spanning stretches (helical) occupy residues 4 to 24, 39 to 59, 63 to 83, 102 to 122, 134 to 154, and 171 to 191; these read FLLL…QFLG, IGMS…SYLV, ILLP…VIAV, LLGI…VALL, VIYG…FAAM, and SISM…TGLV.

Belongs to the NqrDE/RnfAE family. In terms of assembly, the complex is composed of six subunits: RnfA, RnfB, RnfC, RnfD, RnfE and RnfG.

It localises to the cell inner membrane. Part of a membrane-bound complex that couples electron transfer with translocation of ions across the membrane. This chain is Ion-translocating oxidoreductase complex subunit A, found in Pseudoalteromonas atlantica (strain T6c / ATCC BAA-1087).